The chain runs to 277 residues: Pantothenate synthetase (277 aa).

26–33 (MGNLHEGH) lines the ATP pocket. The active-site Proton donor is H33. Position 57 (Q57) interacts with (R)-pantoate. Q57 provides a ligand contact to beta-alanine. 144–147 (GKKD) is a binding site for ATP. Q150 serves as a coordination point for (R)-pantoate. Residues G173 and 181–184 (LSSR) each bind ATP.

Belongs to the pantothenate synthetase family. Homodimer.

The protein localises to the cytoplasm. The enzyme catalyses (R)-pantoate + beta-alanine + ATP = (R)-pantothenate + AMP + diphosphate + H(+). It functions in the pathway cofactor biosynthesis; (R)-pantothenate biosynthesis; (R)-pantothenate from (R)-pantoate and beta-alanine: step 1/1. Catalyzes the condensation of pantoate with beta-alanine in an ATP-dependent reaction via a pantoyl-adenylate intermediate. The sequence is that of Pantothenate synthetase from Laribacter hongkongensis (strain HLHK9).